The chain runs to 302 residues: Digeranylgeranylglyceryl phosphate synthase (302 aa).

Transmembrane regions (helical) follow at residues leucine 21 to glycine 41, isoleucine 43 to tyrosine 63, isoleucine 103 to leucine 123, isoleucine 144 to methionine 164, glycine 167 to leucine 187, alanine 218 to isoleucine 238, methionine 244 to leucine 264, and alanine 282 to methionine 302.

Belongs to the UbiA prenyltransferase family. DGGGP synthase subfamily. Requires Mg(2+) as cofactor.

Its subcellular location is the cell membrane. It catalyses the reaction sn-3-O-(geranylgeranyl)glycerol 1-phosphate + (2E,6E,10E)-geranylgeranyl diphosphate = 2,3-bis-O-(geranylgeranyl)-sn-glycerol 1-phosphate + diphosphate. Its pathway is membrane lipid metabolism; glycerophospholipid metabolism. Its function is as follows. Prenyltransferase that catalyzes the transfer of the geranylgeranyl moiety of geranylgeranyl diphosphate (GGPP) to the C2 hydroxyl of (S)-3-O-geranylgeranylglyceryl phosphate (GGGP). This reaction is the second ether-bond-formation step in the biosynthesis of archaeal membrane lipids. This Hyperthermus butylicus (strain DSM 5456 / JCM 9403 / PLM1-5) protein is Digeranylgeranylglyceryl phosphate synthase.